Here is a 377-residue protein sequence, read N- to C-terminus: RING finger protein 215 (377 aa).

Residues 1 to 22 (MGPAARPALRSPPPPPPPPPSP) lie on the Cytoplasmic side of the membrane. The tract at residues 1-22 (MGPAARPALRSPPPPPPPPPSP) is disordered. Positions 10 to 22 (RSPPPPPPPPPSP) are enriched in pro residues. Residues 23–43 (LLLLLPLLPLWLGLAGPGAAA) traverse the membrane as a helical segment. Residues 44–250 (DGSEPAAGAG…GGSRAQEQKP (207 aa)) lie on the Extracellular side of the membrane. Asparagine 186 is a glycosylation site (N-linked (GlcNAc...) asparagine). The helical transmembrane segment at 251-271 (LQQLWNAILLVAMLLCTGLVV) threads the bilayer. Topologically, residues 272 to 377 (QAQRQASRQS…NVLGNRYSDD (106 aa)) are cytoplasmic. The segment at 325–366 (CAVCLDYFCNKQWLRVLPCKHEFHRDCVDPWLMLQQTCPLCK) adopts an RING-type; atypical zinc-finger fold.

It localises to the membrane. In Homo sapiens (Human), this protein is RING finger protein 215 (RNF215).